The primary structure comprises 187 residues: uncharacterized protein (187 aa).

Residues 8-28 traverse the membrane as a helical segment; that stretch reads ITFFIILLICLICILLLLVVF. Residues 99–153 form a disordered region; that stretch reads PLENRRDMEAEEENQINEKQEPENAGETGQEEDDGLQKIHTSVTRTPSVVESQKR. The segment covering 137–149 has biased composition (polar residues); the sequence is IHTSVTRTPSVVE.

It is found in the membrane. This is an uncharacterized protein from Homo sapiens (Human).